Here is a 729-residue protein sequence, read N- to C-terminus: Phosphoribosylformylglycinamidine synthase subunit PurL (729 aa).

The active site involves histidine 54. Residues tyrosine 57 and lysine 96 each contribute to the ATP site. Residue glutamate 98 coordinates Mg(2+). Substrate contacts are provided by residues 99–102 (SHNH) and arginine 121. Histidine 100 (proton acceptor) is an active-site residue. Aspartate 122 is a binding site for Mg(2+). Glutamine 245 contributes to the substrate binding site. Aspartate 273 contacts Mg(2+). 317–319 (ETQ) contacts substrate. 2 residues coordinate ATP: aspartate 495 and glycine 532. Position 533 (asparagine 533) interacts with Mg(2+). Position 535 (serine 535) interacts with substrate.

Belongs to the FGAMS family. As to quaternary structure, monomer. Part of the FGAM synthase complex composed of 1 PurL, 1 PurQ and 2 PurS subunits.

It is found in the cytoplasm. The enzyme catalyses N(2)-formyl-N(1)-(5-phospho-beta-D-ribosyl)glycinamide + L-glutamine + ATP + H2O = 2-formamido-N(1)-(5-O-phospho-beta-D-ribosyl)acetamidine + L-glutamate + ADP + phosphate + H(+). It functions in the pathway purine metabolism; IMP biosynthesis via de novo pathway; 5-amino-1-(5-phospho-D-ribosyl)imidazole from N(2)-formyl-N(1)-(5-phospho-D-ribosyl)glycinamide: step 1/2. In terms of biological role, part of the phosphoribosylformylglycinamidine synthase complex involved in the purines biosynthetic pathway. Catalyzes the ATP-dependent conversion of formylglycinamide ribonucleotide (FGAR) and glutamine to yield formylglycinamidine ribonucleotide (FGAM) and glutamate. The FGAM synthase complex is composed of three subunits. PurQ produces an ammonia molecule by converting glutamine to glutamate. PurL transfers the ammonia molecule to FGAR to form FGAM in an ATP-dependent manner. PurS interacts with PurQ and PurL and is thought to assist in the transfer of the ammonia molecule from PurQ to PurL. The chain is Phosphoribosylformylglycinamidine synthase subunit PurL from Staphylococcus saprophyticus subsp. saprophyticus (strain ATCC 15305 / DSM 20229 / NCIMB 8711 / NCTC 7292 / S-41).